Reading from the N-terminus, the 349-residue chain is Protein-glutamate methylesterase/protein-glutamine glutaminase (349 aa).

In terms of domain architecture, Response regulatory spans 5–122 (RVLSVDDSAL…REGMLAYSEM (118 aa)). Asp56 carries the post-translational modification 4-aspartylphosphate. One can recognise a CheB-type methylesterase domain in the interval 152–344 (LLSSEKLIAI…QQMLAKISAG (193 aa)). Active-site residues include Ser164, His190, and Asp286.

It belongs to the CheB family. Phosphorylated by CheA. Phosphorylation of the N-terminal regulatory domain activates the methylesterase activity.

It localises to the cytoplasm. The enzyme catalyses [protein]-L-glutamate 5-O-methyl ester + H2O = L-glutamyl-[protein] + methanol + H(+). The catalysed reaction is L-glutaminyl-[protein] + H2O = L-glutamyl-[protein] + NH4(+). Functionally, involved in chemotaxis. Part of a chemotaxis signal transduction system that modulates chemotaxis in response to various stimuli. Catalyzes the demethylation of specific methylglutamate residues introduced into the chemoreceptors (methyl-accepting chemotaxis proteins or MCP) by CheR. Also mediates the irreversible deamidation of specific glutamine residues to glutamic acid. This chain is Protein-glutamate methylesterase/protein-glutamine glutaminase, found in Salmonella choleraesuis (strain SC-B67).